Consider the following 83-residue polypeptide: Small ribosomal subunit protein eS21 (83 aa).

The residue at position 1 (methionine 1) is an N-acetylmethionine. Lysine 41 is covalently cross-linked (Glycyl lysine isopeptide (Lys-Gly) (interchain with G-Cter in SUMO2)).

This sequence belongs to the eukaryotic ribosomal protein eS21 family. As to quaternary structure, component of the 40S small ribosomal subunit.

The protein localises to the cytoplasm. Its subcellular location is the cytosol. It localises to the rough endoplasmic reticulum. Functionally, component of the small ribosomal subunit. The ribosome is a large ribonucleoprotein complex responsible for the synthesis of proteins in the cell. The sequence is that of Small ribosomal subunit protein eS21 (RPS21) from Oryctolagus cuniculus (Rabbit).